The chain runs to 71 residues: Cytotoxic linear peptide IsCT2 (71 aa).

A signal peptide spans 1–23; that stretch reads MKTQFAILLVALVLFQMFAQSEA. Phenylalanine amide is present on phenylalanine 36. The propeptide occupies 40–71; the sequence is ALNNDLDLDGLDELFDGEISQADVDFLKELMR.

This sequence belongs to the non-disulfide-bridged peptide (NDBP) superfamily. Short antimicrobial peptide (group 4) family. Post-translationally, isCT2F is an enzymatic proteolytic cleavage product of IsCT2 by the proteases present in the venom. Expressed by the venom gland.

It localises to the secreted. The protein resides in the target cell membrane. IsCT2 shows weak hemolytic activity and antibacterial activity against both Gram-positive and Gram-negative bacteria probably by forming pores in the cell membrane. IsCT2 adopts an amphipathic alpha-helical structure. In terms of biological role, isCT2f shows neither hemolytic, nor antibacterial activities, surely due to the fact that it cannot apply amphipathic alpha-helical structure. The chain is Cytotoxic linear peptide IsCT2 from Opisthacanthus madagascariensis (Scorpion).